The chain runs to 528 residues: uncharacterized protein (528 aa).

The interval 1–51 is disordered; it reads MEHPKRPTPKNEALHIDASGRGESSFSVHRSHSGGHEPFAPSPGSSIGASV. 2 consecutive repeat copies span residues 185 to 213 and 285 to 313. A 2 X 29 AA repeats region spans residues 185–313; the sequence is EQEEEYISNS…EEKRKLQQAL (129 aa). 2 disordered regions span residues 467–497 and 509–528; these read RAHG…NNDT and TVHP…DSHY. Over residues 472–496 the composition is skewed to polar residues; the sequence is SPPTVVVQPSTSRAGSNSTANINND.

This is an uncharacterized protein from Caenorhabditis elegans.